The following is a 94-amino-acid chain: Small ribosomal subunit protein uS19 (94 aa).

The tract at residues 73–94 (EFAPTRTYRGHGKDAERTTRRR) is disordered. A compositionally biased stretch (basic and acidic residues) spans 83–94 (HGKDAERTTRRR).

Belongs to the universal ribosomal protein uS19 family.

Its function is as follows. Protein S19 forms a complex with S13 that binds strongly to the 16S ribosomal RNA. The chain is Small ribosomal subunit protein uS19 from Thermomicrobium roseum (strain ATCC 27502 / DSM 5159 / P-2).